The sequence spans 199 residues: Large ribosomal subunit protein bL25 (199 aa).

The protein belongs to the bacterial ribosomal protein bL25 family. CTC subfamily. As to quaternary structure, part of the 50S ribosomal subunit; part of the 5S rRNA/L5/L18/L25 subcomplex. Contacts the 5S rRNA. Binds to the 5S rRNA independently of L5 and L18.

Functionally, this is one of the proteins that binds to the 5S RNA in the ribosome where it forms part of the central protuberance. This Chlorobaculum tepidum (strain ATCC 49652 / DSM 12025 / NBRC 103806 / TLS) (Chlorobium tepidum) protein is Large ribosomal subunit protein bL25.